The chain runs to 339 residues: MGNTVSCCVSPSGSPKLPRQVERLEDYQNNTDISDDTGPYLQHISDREVPDDLALESNPSDHARASTIFLSKSQTDVRDRRKSNHINHVSPGLLSKKYSSCSTIFIDDSTVSQPNLKSTIKCVTLAIYYHIKNRDSDRSLDIFDEKMHPLSREQVPDDYSRTDPEHKLIYRFVRTLFSAAQLTAECAIVTLVYLERLLTYAELDICPSNWKRIVLGAILLASKVWDDQAVWNVDYCQILKDITVEDMNEMERHFLELLQFNINVPASVYAKYYFDLRSLADDNNLSFPLEPLSNERAQKLEAISRLCEDKYKDLSRVAMRRSFSADNLVGIRRSNAVLS.

One can recognise a Cyclin N-terminal domain in the interval 181–263 (QLTAECAIVT…FLELLQFNIN (83 aa)).

It belongs to the cyclin family. Cyclin Y subfamily.

It localises to the cell membrane. Its function is as follows. Key regulator of Wnt signaling implicated in various biological processes such as embryonic neurogenesis. The chain is Cyclin-Y-like protein 1 (ccnyl1) from Danio rerio (Zebrafish).